The primary structure comprises 238 residues: Purine nucleoside phosphorylase DeoD-type (238 aa).

Residue histidine 4 participates in a purine D-ribonucleoside binding. Residues glycine 20, arginine 24, arginine 43, and 87 to 90 (RVGS) contribute to the phosphate site. A purine D-ribonucleoside is bound by residues 179-181 (EME) and 203-204 (SD). The active-site Proton donor is the aspartate 204.

It belongs to the PNP/UDP phosphorylase family. In terms of assembly, homohexamer; trimer of homodimers.

It carries out the reaction a purine D-ribonucleoside + phosphate = a purine nucleobase + alpha-D-ribose 1-phosphate. The catalysed reaction is a purine 2'-deoxy-D-ribonucleoside + phosphate = a purine nucleobase + 2-deoxy-alpha-D-ribose 1-phosphate. Functionally, catalyzes the reversible phosphorolytic breakdown of the N-glycosidic bond in the beta-(deoxy)ribonucleoside molecules, with the formation of the corresponding free purine bases and pentose-1-phosphate. This Histophilus somni (strain 129Pt) (Haemophilus somnus) protein is Purine nucleoside phosphorylase DeoD-type.